Reading from the N-terminus, the 609-residue chain is Chaperone protein DnaK (609 aa).

T173 is modified (phosphothreonine; by autocatalysis). A disordered region spans residues 580–609; that stretch reads QAAQGGGAEGQEPKKDNVVDADYEVVDDKK. Positions 598–609 are enriched in acidic residues; the sequence is VDADYEVVDDKK.

This sequence belongs to the heat shock protein 70 family.

In terms of biological role, acts as a chaperone. The protein is Chaperone protein DnaK of Brevibacillus brevis (strain 47 / JCM 6285 / NBRC 100599).